The sequence spans 426 residues: Serine--tRNA ligase (426 aa).

L-serine is bound at residue T229 to E231. ATP is bound by residues R260–E262 and V276. Position 283 (E283) interacts with L-serine. E350–S353 is a binding site for ATP. T386 contributes to the L-serine binding site.

It belongs to the class-II aminoacyl-tRNA synthetase family. Type-1 seryl-tRNA synthetase subfamily. As to quaternary structure, homodimer. The tRNA molecule binds across the dimer.

The protein resides in the cytoplasm. It carries out the reaction tRNA(Ser) + L-serine + ATP = L-seryl-tRNA(Ser) + AMP + diphosphate + H(+). The enzyme catalyses tRNA(Sec) + L-serine + ATP = L-seryl-tRNA(Sec) + AMP + diphosphate + H(+). It participates in aminoacyl-tRNA biosynthesis; selenocysteinyl-tRNA(Sec) biosynthesis; L-seryl-tRNA(Sec) from L-serine and tRNA(Sec): step 1/1. Functionally, catalyzes the attachment of serine to tRNA(Ser). Is also able to aminoacylate tRNA(Sec) with serine, to form the misacylated tRNA L-seryl-tRNA(Sec), which will be further converted into selenocysteinyl-tRNA(Sec). The sequence is that of Serine--tRNA ligase from Rhodopirellula baltica (strain DSM 10527 / NCIMB 13988 / SH1).